Consider the following 226-residue polypeptide: Charged multivesicular body protein 5 (226 aa).

Positions isoleucine 21–asparagine 93 form a coiled coil. The span at lysine 188–glycine 198 shows a compositional bias: basic and acidic residues. The disordered stretch occupies residues lysine 188–threonine 226. Serine 201 is subject to Phosphoserine. Threonine 226 bears the Phosphothreonine mark.

The protein belongs to the SNF7 family. As to quaternary structure, probable peripherally associated component of the endosomal sorting required for transport complex III (ESCRT-III).

It is found in the endosome membrane. Its function is as follows. Probable peripherally associated component of the endosomal sorting required for transport complex III (ESCRT-III) which is involved in multivesicular bodies (MVBs) formation and sorting of endosomal cargo proteins into MVBs. MVBs contain intraluminal vesicles (ILVs) that are generated by invagination and scission from the limiting membrane of the endosome and are delivered to lysosomes enabling degradation of membrane proteins. Specifically down-regulates Notch signaling activity in the germarium, probably by facilitating Notch endocytosis. This Drosophila melanogaster (Fruit fly) protein is Charged multivesicular body protein 5.